A 404-amino-acid polypeptide reads, in one-letter code: Probable tRNA sulfurtransferase (404 aa).

Positions 61 to 166 (QTLVTGLPKI…HDATYMMAQV (106 aa)) constitute a THUMP domain. Residues 184-185 (ML), 209-210 (HF), arginine 266, glycine 288, and glutamine 297 contribute to the ATP site.

Belongs to the ThiI family.

The protein resides in the cytoplasm. The enzyme catalyses [ThiI sulfur-carrier protein]-S-sulfanyl-L-cysteine + a uridine in tRNA + 2 reduced [2Fe-2S]-[ferredoxin] + ATP + H(+) = [ThiI sulfur-carrier protein]-L-cysteine + a 4-thiouridine in tRNA + 2 oxidized [2Fe-2S]-[ferredoxin] + AMP + diphosphate. It catalyses the reaction [ThiS sulfur-carrier protein]-C-terminal Gly-Gly-AMP + S-sulfanyl-L-cysteinyl-[cysteine desulfurase] + AH2 = [ThiS sulfur-carrier protein]-C-terminal-Gly-aminoethanethioate + L-cysteinyl-[cysteine desulfurase] + A + AMP + 2 H(+). It functions in the pathway cofactor biosynthesis; thiamine diphosphate biosynthesis. Catalyzes the ATP-dependent transfer of a sulfur to tRNA to produce 4-thiouridine in position 8 of tRNAs, which functions as a near-UV photosensor. Also catalyzes the transfer of sulfur to the sulfur carrier protein ThiS, forming ThiS-thiocarboxylate. This is a step in the synthesis of thiazole, in the thiamine biosynthesis pathway. The sulfur is donated as persulfide by IscS. This Lysinibacillus sphaericus (strain C3-41) protein is Probable tRNA sulfurtransferase.